An 805-amino-acid polypeptide reads, in one-letter code: Cation channel sperm-associated auxiliary subunit delta (805 aa).

An N-terminal signal peptide occupies residues 1–16 (MLVLMLAAAVATMVRA). Residues 17–723 (HTLCRVHTVR…ALPVTKFQPL (707 aa)) are Extracellular-facing. Intrachain disulfides connect Cys-20-Cys-366, Cys-56-Cys-143, Cys-142-Cys-149, Cys-384-Cys-493, Cys-507-Cys-701, Cys-522-Cys-569, and Cys-621-Cys-651. N-linked (GlcNAc...) asparagine glycans are attached at residues Asn-227, Asn-419, Asn-469, Asn-535, and Asn-627. A helical membrane pass occupies residues 724 to 745 (LTILLMVTTTLLTAWLAYAIPK). The Cytoplasmic segment spans residues 746–805 (QLRSEKGQRLLGFCYQILQLCLGVCFCTWLRGKLRQWLRPRRVKDQNRGKVRVAQKHPET).

The protein belongs to the CATSPERD family. In terms of assembly, component of the CatSper complex or CatSpermasome composed of the core pore-forming members CATSPER1, CATSPER2, CATSPER3 and CATSPER4 as well as auxiliary members CATSPERB, CATSPERG2, CATSPERD, CATSPERE, CATSPERZ, C2CD6/CATSPERT, SLCO6C1, TMEM249, TMEM262 and EFCAB9. HSPA1 may be an additional auxiliary complex member. The core complex members CATSPER1, CATSPER2, CATSPER3 and CATSPER4 form a heterotetrameric channel. The auxiliary CATSPERB, CATSPERG2, CATSPERD and CATSPERE subunits form a pavilion-like structure over the pore which stabilizes the complex through interactions with CATSPER4, CATSPER3, CATSPER1 and CATSPER2 respectively. SLCO6C1 interacts with CATSPERE and TMEM262/CATSPERH interacts with CATSPERB, further stabilizing the complex. C2CD6/CATSPERT interacts at least with CATSPERD and is required for targeting the CatSper complex in the flagellar membrane. As to expression, testis-specific.

It is found in the cell projection. The protein localises to the cilium. The protein resides in the flagellum membrane. Its function is as follows. Auxiliary component of the CatSper complex, a complex involved in sperm cell hyperactivation. Sperm cell hyperactivation is needed for sperm motility which is essential late in the preparation of sperm for fertilization. Required for CATSPER1 stability before intraflagellar transport and/or incorporation of the CatSper complex channel into the flagellar membrane. The sequence is that of Cation channel sperm-associated auxiliary subunit delta from Mus musculus (Mouse).